Consider the following 80-residue polypeptide: U1-nemetoxin-Csp1a (80 aa).

Positions M1–A20 are cleaved as a signal peptide. Positions A21–R41 are excised as a propeptide. Cystine bridges form between C42–C56, C49–C60, C55–C77, and C66–C73.

This sequence belongs to the neurotoxin 13 (insecticidal toxin ABC) family. 02 (Calisoga) subfamily. In terms of tissue distribution, expressed by the venom gland.

Its subcellular location is the secreted. Functionally, causes paralysis to insect larvae (H.virescens). This toxin is active only on insects. The protein is U1-nemetoxin-Csp1a of Calisoga sp. (Spider).